We begin with the raw amino-acid sequence, 417 residues long: NADP-specific glutamate dehydrogenase A1 (417 aa).

Lysine 105 is an active-site residue.

Belongs to the Glu/Leu/Phe/Val dehydrogenases family. Homohexamer.

The enzyme catalyses L-glutamate + NADP(+) + H2O = 2-oxoglutarate + NH4(+) + NADPH + H(+). The chain is NADP-specific glutamate dehydrogenase A1 (gdhA1) from Halobacterium salinarum (Halobacterium halobium).